The sequence spans 340 residues: MAANNKKYFLESFSPLGYVKNNFQGNLRSVNWNLVDDEKDLEVWNRIVQNFWLPEKIPVSNDIPSWKKLSKDWQDLITKTFTGLTLLDTIQATIGDICQIDHALTDHEQVIYANFAFMVGVHARSYGTIFSTLCTSEQINAAHEWVVNTESLQKRAKALIPYYTGNDPLKSKVAAALMPGFLLYGGFYLPFYLSSRKQLPNTSDIIRLILRDKVIHNYYSGYKYQRKLEKLPLAKQKEMKAFVFELMYRLIELEKDYLKELYEGFGIVDDAIKFSVYNAGKFLQNLGYDSPFTAAETRIKPEIFAQLSARADENHDFFSGNGSSYVMGVSEETNDDDWNF.

Fe cation is bound by residues aspartate 88 and histidine 122. Tyrosine 126 is a catalytic residue. Histidine 216 is a binding site for Fe cation.

This sequence belongs to the ribonucleoside diphosphate reductase small chain family. Tetramer of two alpha and two beta subunits. The cofactor is Fe cation.

The enzyme catalyses a 2'-deoxyribonucleoside 5'-diphosphate + [thioredoxin]-disulfide + H2O = a ribonucleoside 5'-diphosphate + [thioredoxin]-dithiol. In terms of biological role, provides the precursors necessary for DNA synthesis. Catalyzes the biosynthesis of deoxyribonucleotides from the corresponding ribonucleotides. The polypeptide is Ribonucleoside-diphosphate reductase subunit beta (nrdF) (Mycoplasma genitalium (strain ATCC 33530 / DSM 19775 / NCTC 10195 / G37) (Mycoplasmoides genitalium)).